A 361-amino-acid chain; its full sequence is Prostaglandin E2 receptor EP2 subtype (361 aa).

A compositionally biased stretch (polar residues) spans 1 to 10; the sequence is MGSISNNSGS. The tract at residues 1–21 is disordered; sequence MGSISNNSGSEDCESREWLPS. The Extracellular portion of the chain corresponds to 1–23; sequence MGSISNNSGSEDCESREWLPSGE. Asparagine 6 carries N-linked (GlcNAc...) asparagine glycosylation. The chain crosses the membrane as a helical span at residues 24-47; it reads SPAISSAMFSAGVLGNLIALALLA. Topologically, residues 48-65 are cytoplasmic; that stretch reads RRWRGDAGRRAGRGNSIS. A helical transmembrane segment spans residues 66-91; it reads LFHVLVTELVFTDLLGTCLISPVVLA. The Extracellular segment spans residues 92–111; that stretch reads SYARNQTLMALEPERRACTY. Asparagine 96 is a glycosylation site (N-linked (GlcNAc...) asparagine). An intrachain disulfide couples cysteine 109 to cysteine 187. Residues 112–132 form a helical membrane-spanning segment; sequence FAFAMTFFSLATMLMLFAMAL. The Cytoplasmic portion of the chain corresponds to 133–151; it reads ERYLSIGRPYFYQRHVTRR. The chain crosses the membrane as a helical span at residues 152-176; the sequence is GGLAVLPTIYTVSLLFCSLPLLGYG. The Extracellular portion of the chain corresponds to 177-198; sequence QYVQYCPGTWCFIRHGRTAYLQ. A helical transmembrane segment spans residues 199 to 223; sequence LYATLLLLLIVAVLACNFSVILNLI. Topologically, residues 224–262 are cytoplasmic; that stretch reads RMHRRSGRSRCGPSLGSCRDGSGTRRRGERVSVAEETDH. A disordered region spans residues 230 to 253; that stretch reads GRSRCGPSLGSCRDGSGTRRRGER. The helical transmembrane segment at 263-286 threads the bilayer; that stretch reads LILLAIMTITFAICSLPFTIFAYM. Asparagine 287 is a glycosylation site (N-linked (GlcNAc...) asparagine). The Extracellular segment spans residues 287–299; the sequence is NETSSRREKWDLQ. The chain crosses the membrane as a helical span at residues 300–323; it reads ALRFLSINSIIDPWVFAIFRPPVL. Residues 324-361 are Cytoplasmic-facing; the sequence is RLMRSVLCCRVSLRAQDATQTSCSIQSNASRLTFVDTS.

It belongs to the G-protein coupled receptor 1 family.

It is found in the cell membrane. In terms of biological role, receptor for prostaglandin E2 (PGE2). The activity of this receptor is mediated by G(s) proteins that stimulate adenylate cyclase. The subsequent raise in intracellular cAMP is responsible for the relaxing effect of this receptor on smooth muscle. The chain is Prostaglandin E2 receptor EP2 subtype (PTGER2) from Canis lupus familiaris (Dog).